The chain runs to 353 residues: Photosystem II D2 protein (353 aa).

Thr2 is modified (N-acetylthreonine). Phosphothreonine is present on Thr2. A helical membrane pass occupies residues 41 to 61 (CAYFALGGWFTGTTFVTSWYT). Chlorophyll a is bound at residue His118. The helical transmembrane segment at 125–141 (GFMLRQFELARSVQLRP) threads the bilayer. Pheophytin a-binding residues include Gln130 and Asn143. The chain crosses the membrane as a helical span at residues 153 to 166 (VFVSVSLIYPLGQA). A chlorophyll a-binding site is contributed by His198. Residues 208 to 228 (AALLCAIHGATVENTLFEDGD) form a helical membrane-spanning segment. A plastoquinone-binding residues include His215 and Phe262. Position 215 (His215) interacts with Fe cation. A Fe cation-binding site is contributed by His269. The chain crosses the membrane as a helical span at residues 279–295 (GLWMSAIGVVGLALNLR).

Belongs to the reaction center PufL/M/PsbA/D family. As to quaternary structure, PSII is composed of 1 copy each of membrane proteins PsbA, PsbB, PsbC, PsbD, PsbE, PsbF, PsbH, PsbI, PsbJ, PsbK, PsbL, PsbM, PsbT, PsbX, PsbY, PsbZ, Psb30/Ycf12, at least 3 peripheral proteins of the oxygen-evolving complex and a large number of cofactors. It forms dimeric complexes. It depends on The D1/D2 heterodimer binds P680, chlorophylls that are the primary electron donor of PSII, and subsequent electron acceptors. It shares a non-heme iron and each subunit binds pheophytin, quinone, additional chlorophylls, carotenoids and lipids. There is also a Cl(-1) ion associated with D1 and D2, which is required for oxygen evolution. The PSII complex binds additional chlorophylls, carotenoids and specific lipids. as a cofactor.

The protein resides in the plastid. It is found in the chloroplast thylakoid membrane. The enzyme catalyses 2 a plastoquinone + 4 hnu + 2 H2O = 2 a plastoquinol + O2. In terms of biological role, photosystem II (PSII) is a light-driven water:plastoquinone oxidoreductase that uses light energy to abstract electrons from H(2)O, generating O(2) and a proton gradient subsequently used for ATP formation. It consists of a core antenna complex that captures photons, and an electron transfer chain that converts photonic excitation into a charge separation. The D1/D2 (PsbA/PsbD) reaction center heterodimer binds P680, the primary electron donor of PSII as well as several subsequent electron acceptors. D2 is needed for assembly of a stable PSII complex. This is Photosystem II D2 protein from Angiopteris evecta (Mule's foot fern).